Reading from the N-terminus, the 332-residue chain is Glycerol-3-phosphate dehydrogenase [NAD(P)+] (332 aa).

Residues serine 11, tryptophan 12, arginine 32, arginine 33, and lysine 106 each coordinate NADPH. The sn-glycerol 3-phosphate site is built by lysine 106 and glycine 136. An NADPH-binding site is contributed by alanine 140. Positions 191, 244, 254, 255, and 256 each coordinate sn-glycerol 3-phosphate. Lysine 191 acts as the Proton acceptor in catalysis. Residue arginine 255 coordinates NADPH. Positions 280 and 282 each coordinate NADPH.

Belongs to the NAD-dependent glycerol-3-phosphate dehydrogenase family.

The protein localises to the cytoplasm. It catalyses the reaction sn-glycerol 3-phosphate + NAD(+) = dihydroxyacetone phosphate + NADH + H(+). It carries out the reaction sn-glycerol 3-phosphate + NADP(+) = dihydroxyacetone phosphate + NADPH + H(+). It participates in membrane lipid metabolism; glycerophospholipid metabolism. Its function is as follows. Catalyzes the reduction of the glycolytic intermediate dihydroxyacetone phosphate (DHAP) to sn-glycerol 3-phosphate (G3P), the key precursor for phospholipid synthesis. This is Glycerol-3-phosphate dehydrogenase [NAD(P)+] from Corynebacterium jeikeium (strain K411).